The following is a 167-amino-acid chain: SsrA-binding protein (167 aa).

It belongs to the SmpB family.

It localises to the cytoplasm. Functionally, required for rescue of stalled ribosomes mediated by trans-translation. Binds to transfer-messenger RNA (tmRNA), required for stable association of tmRNA with ribosomes. tmRNA and SmpB together mimic tRNA shape, replacing the anticodon stem-loop with SmpB. tmRNA is encoded by the ssrA gene; the 2 termini fold to resemble tRNA(Ala) and it encodes a 'tag peptide', a short internal open reading frame. During trans-translation Ala-aminoacylated tmRNA acts like a tRNA, entering the A-site of stalled ribosomes, displacing the stalled mRNA. The ribosome then switches to translate the ORF on the tmRNA; the nascent peptide is terminated with the 'tag peptide' encoded by the tmRNA and targeted for degradation. The ribosome is freed to recommence translation, which seems to be the essential function of trans-translation. This chain is SsrA-binding protein, found in Stenotrophomonas maltophilia (strain R551-3).